Consider the following 191-residue polypeptide: Ribosomal RNA large subunit methyltransferase E (191 aa).

The S-adenosyl-L-methionine site is built by Gly49, Trp51, Asp66, Asp82, and Asp105. Lys145 serves as the catalytic Proton acceptor.

Belongs to the class I-like SAM-binding methyltransferase superfamily. RNA methyltransferase RlmE family.

Its subcellular location is the cytoplasm. The enzyme catalyses uridine(2552) in 23S rRNA + S-adenosyl-L-methionine = 2'-O-methyluridine(2552) in 23S rRNA + S-adenosyl-L-homocysteine + H(+). Its function is as follows. Specifically methylates the uridine in position 2552 of 23S rRNA at the 2'-O position of the ribose in the fully assembled 50S ribosomal subunit. The polypeptide is Ribosomal RNA large subunit methyltransferase E (Archaeoglobus fulgidus (strain ATCC 49558 / DSM 4304 / JCM 9628 / NBRC 100126 / VC-16)).